The primary structure comprises 112 residues: Putative pterin-4-alpha-carbinolamine dehydratase (112 aa).

The protein belongs to the pterin-4-alpha-carbinolamine dehydratase family.

The enzyme catalyses (4aS,6R)-4a-hydroxy-L-erythro-5,6,7,8-tetrahydrobiopterin = (6R)-L-erythro-6,7-dihydrobiopterin + H2O. This is Putative pterin-4-alpha-carbinolamine dehydratase from Photobacterium profundum (strain SS9).